A 107-amino-acid polypeptide reads, in one-letter code: Iron-sulfur cluster assembly protein CyaY (107 aa).

The protein belongs to the frataxin family.

In terms of biological role, involved in iron-sulfur (Fe-S) cluster assembly. May act as a regulator of Fe-S biogenesis. In Neisseria meningitidis serogroup A / serotype 4A (strain DSM 15465 / Z2491), this protein is Iron-sulfur cluster assembly protein CyaY.